The following is a 1027-amino-acid chain: MDAQIENAIQIAWDPQSDPSLKSQAFEFLQQLRADPSAWHICSTLFTKSPRSADVVRLVSLEIVNLAVQVQQLDAASLAFLKDSLLDYVRRTYGPGAQDEPDVPSLQNKLTQTLTYLFARLYKSGWETFLSDFLALTASSEGNPRQRDNVRGVTLYLRILGSVHDEIADNMLARQGNEGKRNAELKDAIRERDMRMVVESWQDLLSQYTGRDDAILEHTLKVMAKWVSWIDISLVITQDMLNLLFPLIGCVNPQGGADMVRDAAIEAFTEIAGKKMKPVDKTELISFLNLRQIISELVASPPLSQFRGTHRYDSDLAESVAKLVNVVVTDVVKVLEDGSVGEESRAKAGQHLQDFLPLLLRLFSDEYDEVCSTVIPSLTDILTFLRKVPELPDSYREMLRPIMDAIVAKMRFDETSHWFEGEEAEEEADFLELRKRLQNLQKSVAAVDENLFIDVMSNLVATTLQNLDERGAQMDWRDIDLALHELLQFGELALPNQGLAAKSQPSSNAAERLNVIMRKLVESSIADFPHPAVLLQYMEVCVRYCVFFETNHSYIPRVLENFVRLVHYDLTRFRVRSWYLFHRFVKQLRAQVGNVAETIIQSIADLLPIKAEVSAEDGSEDDMSSDQTDNSADAIFNSQLYLFEAIGYISSTSATPVDKQALYARSVMEPLFRDMENHLEKAKSGDAQAILQIHHVIMALGTLAHGFGDHAKPGHQRQAPDKLVSAEFARAAEAILIALGQLNSRMDIRAACRSAFSKLLNVLGSAVLPQLPQWIEGLLSQSSSKDEMAMFLRLLDQVVYGFKTEISDVLNLLLTPLLQRVFGGLAEPINGTDDEIQLGELRREYLTFLQIILDNDLGAVLVSETNQGFFESIISSVVTLAKTGGHVNMVASRLAFCTLYRIVGVWGGPDVANISANPSAPTGTPTPAIPGFDQFMIERFHPVCFEVLQDPQFNPSKDAQSKQVLNEIAALEQAIYVKTGNSFISHLQSSLFPALGIDGTEFLRCMTTSTDKKTFGNYLQNLIKNRR.

The protein belongs to the exportin family.

The protein resides in the nucleus. It is found in the cytoplasm. In terms of biological role, tRNA nucleus export receptor which facilitates tRNA translocation across the nuclear pore complex. Involved in pre-tRNA splicing, probably by affecting the interaction of pre-tRNA with splicing endonuclease. The chain is Exportin-T (LOS1) from Pyricularia oryzae (strain 70-15 / ATCC MYA-4617 / FGSC 8958) (Rice blast fungus).